Consider the following 504-residue polypeptide: Tachykinin-like peptides receptor 86C (504 aa).

Topologically, residues 1–84 (MSEIVDTELL…PYELPWEQKT (84 aa)) are extracellular. N-linked (GlcNAc...) asparagine glycosylation is found at Asn12, Asn28, and Asn36. Residues 85–108 (IWAIIFGLMMFVAIAGNGIVLWIV) traverse the membrane as a helical segment. Topologically, residues 109-118 (TGHRSMRTVT) are cytoplasmic. A helical membrane pass occupies residues 119-143 (NYFLLNLSIADLLMSSLNCVFNFIF). Topologically, residues 144–155 (MLNSDWPFGSIY) are extracellular. A helical membrane pass occupies residues 156-179 (CTINNFVANVTVSTSVFTLVAISF). Residues 180–199 (DRYIAIVHPLKRRTSRRKVR) lie on the Cytoplasmic side of the membrane. A helical membrane pass occupies residues 200-224 (IILVLIWALSCVLSAPCLLYSSIMT). The Extracellular segment spans residues 225-250 (KHYYNGKSRTVCFMMWPDGRYPTSMA). A helical membrane pass occupies residues 251–275 (DYAYNLIILVLTYGIPMIVMLICYS). The Cytoplasmic segment spans residues 276–308 (LMGRVLWGSRSIGENTDRQMESMKSKRKVVRMF). A helical transmembrane segment spans residues 309 to 330 (IAIVSIFAICWLPYHLFFIYAY). Topologically, residues 331-343 (HNNQVASTKYVQH) are extracellular. Residues 344-367 (MYLGFYWLAMSNAMVNPLIYYWMN) form a helical membrane-spanning segment. The Cytoplasmic portion of the chain corresponds to 368–504 (KRFRMYFQRI…NPVELSPKQM (137 aa)). The segment at 393 to 450 (PKSRLTNKNSSNRHTRAETKSQWKRSTMETQIQQAPVTSSCREQRSAQQQQPPGSGTN) is disordered. Composition is skewed to polar residues over residues 395–404 (SRLTNKNSSN) and 416–450 (KRST…SGTN).

This sequence belongs to the G-protein coupled receptor 1 family. Expressed in central nervous system, as well as in subsets of neurons in each segment of the developing ventral ganglia.

The protein localises to the cell membrane. Functionally, receptor for tachykinin-like peptides. In Drosophila melanogaster (Fruit fly), this protein is Tachykinin-like peptides receptor 86C (TkR86C).